The chain runs to 130 residues: uncharacterized protein (130 aa).

The disordered stretch occupies residues 1–28; that stretch reads MELAKERNGPHQKHHGQCQNHCTSPNTV. Residues 17–28 show a composition bias toward polar residues; it reads QCQNHCTSPNTV.

This is an uncharacterized protein from Saccharomyces cerevisiae (strain ATCC 204508 / S288c) (Baker's yeast).